Reading from the N-terminus, the 403-residue chain is RNA-binding motif, single-stranded-interacting protein 1 (403 aa).

A disordered region spans residues 30–56; sequence PAHPMAPPSPSTTSSNNNSSSSSNSGW. Over residues 40–54 the composition is skewed to low complexity; the sequence is STTSSNNNSSSSSNS. RRM domains follow at residues 62–135 and 141–226; these read TNLY…MAKQ and TNLY…FADG. Threonine 208 carries the post-translational modification Phosphothreonine.

It localises to the nucleus. Functionally, single-stranded DNA binding protein that interacts with the region upstream of the MYC gene. Binds specifically to the DNA sequence motif 5'-[AT]CT[AT][AT]T-3'. Probably has a role in DNA replication. The chain is RNA-binding motif, single-stranded-interacting protein 1 from Rattus norvegicus (Rat).